A 115-amino-acid polypeptide reads, in one-letter code: NADH-ubiquinone oxidoreductase chain 3 (115 aa).

The next 3 membrane-spanning stretches (helical) occupy residues 3-23 (FALI…ITFW), 55-75 (FFLV…LLPL), and 84-104 (LPLM…SLAY).

Belongs to the complex I subunit 3 family. In terms of assembly, core subunit of respiratory chain NADH dehydrogenase (Complex I) which is composed of 45 different subunits. Interacts with TMEM186. Interacts with TMEM242.

It is found in the mitochondrion inner membrane. It carries out the reaction a ubiquinone + NADH + 5 H(+)(in) = a ubiquinol + NAD(+) + 4 H(+)(out). Core subunit of the mitochondrial membrane respiratory chain NADH dehydrogenase (Complex I) which catalyzes electron transfer from NADH through the respiratory chain, using ubiquinone as an electron acceptor. Essential for the catalytic activity of complex I. The chain is NADH-ubiquinone oxidoreductase chain 3 from Gorilla gorilla gorilla (Western lowland gorilla).